Reading from the N-terminus, the 121-residue chain is Autophagy-related protein 8f (121 aa).

Residue Gly117 is the site of Phosphatidylethanolamine amidated glycine attachment. Positions 118–121 (FGSP) are cleaved as a propeptide — removed in mature form.

Belongs to the ATG8 family. As to quaternary structure, interacts with ATG4. Interacts with NBR1. Interacts with ATI1 and ATI2. Interacts with SH3P2. The C-terminal 4 residues are removed by ATG4 to expose Gly-117 at the C-terminus. This Gly-117 forms then a thioester bond with the 'Cys-558' of ATG7 (E1-like activating enzyme) before being transferred to the 'Cys-258' of ATG3 (the specific E2 conjugating enzyme), in order to be finally amidated with phosphatidylethanolamine. This lipid modification anchors ATG8 to autophagosomes. Constitutively expressed.

The protein localises to the cytoplasmic vesicle. The protein resides in the autophagosome membrane. It localises to the vacuole membrane. It is found in the cytoplasm. Its subcellular location is the cytoskeleton. Functionally, ubiquitin-like modifier involved in autophagosomes formation. May mediate the delivery of the autophagosomes to the vacuole via the microtubule cytoskeleton. This chain is Autophagy-related protein 8f (ATG8F), found in Arabidopsis thaliana (Mouse-ear cress).